A 510-amino-acid chain; its full sequence is ATP synthase subunit alpha (510 aa).

An ATP-binding site is contributed by 169–176; the sequence is GDRQTGKT.

The protein belongs to the ATPase alpha/beta chains family. In terms of assembly, F-type ATPases have 2 components, CF(1) - the catalytic core - and CF(0) - the membrane proton channel. CF(1) has five subunits: alpha(3), beta(3), gamma(1), delta(1), epsilon(1). CF(0) has three main subunits: a(1), b(2) and c(9-12). The alpha and beta chains form an alternating ring which encloses part of the gamma chain. CF(1) is attached to CF(0) by a central stalk formed by the gamma and epsilon chains, while a peripheral stalk is formed by the delta and b chains.

The protein resides in the cell inner membrane. It catalyses the reaction ATP + H2O + 4 H(+)(in) = ADP + phosphate + 5 H(+)(out). Produces ATP from ADP in the presence of a proton gradient across the membrane. The alpha chain is a regulatory subunit. The sequence is that of ATP synthase subunit alpha from Methylobacterium radiotolerans (strain ATCC 27329 / DSM 1819 / JCM 2831 / NBRC 15690 / NCIMB 10815 / 0-1).